The following is a 515-amino-acid chain: E3 ubiquitin-protein ligase RNF217 (515 aa).

Disordered regions lie at residues 1–125 (MGEE…VLAQ) and 147–189 (PEAP…ADPL). The span at 10–22 (GSGGARASGGGSA) shows a compositional bias: gly residues. Low complexity-rich tracts occupy residues 39 to 49 (GPRAAASSSRP) and 147 to 157 (PEAPSAESPSP). Residues 158–178 (SESPPQAPLGPIPASPPPSFP) are compositionally biased toward pro residues. A compositionally biased stretch (low complexity) spans 179 to 189 (SSPLSLPADPL). The segment at 232-451 (MVLMCRVCLE…LSIFGCKYRY (220 aa)) is TRIAD supradomain. The Zn(2+) site is built by cysteine 236, cysteine 239, cysteine 256, cysteine 259, cysteine 356, cysteine 359, histidine 364, cysteine 369, cysteine 396, and cysteine 399. The RING-type 1 zinc finger occupies 236 to 282 (CRVCLEDKPIKPLPCCKKAVCEECLKIYLSSQVQLGQVEIKCPVTEC). Residues 301-369 (IKYKYFLELG…HSPWHEGVNC (69 aa)) form an IBR-type zinc finger. The segment at 396-425 (CPKCKIHIQRTEGCDHMTCSQCNTNFCYRC) adopts an RING-type 2; atypical zinc-finger fold. Cysteine 409 is an active-site residue. 6 residues coordinate Zn(2+): cysteine 414, cysteine 417, cysteine 422, cysteine 425, histidine 438, and cysteine 447. The helical transmembrane segment at 476-496 (LILVLGLALGAIAVVIGLFVF) threads the bilayer.

It belongs to the RBR family. RNF217 subfamily. Interacts with HAX1.

Its subcellular location is the membrane. It is found in the cytoplasm. It carries out the reaction [E2 ubiquitin-conjugating enzyme]-S-ubiquitinyl-L-cysteine + [acceptor protein]-L-lysine = [E2 ubiquitin-conjugating enzyme]-L-cysteine + [acceptor protein]-N(6)-ubiquitinyl-L-lysine.. The protein operates within protein modification; protein ubiquitination. E3 ubiquitin-protein ligase which accepts ubiquitin from E2 ubiquitin-conjugating enzymes in the form of a thioester and then directly transfers the ubiquitin to targeted substrates. Mediates the degradation of the iron exporter ferroportin/SLC40A1 and thus regulates iron homeostasis. The sequence is that of E3 ubiquitin-protein ligase RNF217 (Rnf217) from Mus musculus (Mouse).